The chain runs to 379 residues: 4-hydroxy-3-methylbut-2-enyl diphosphate reductase (379 aa).

Residue C39 participates in [4Fe-4S] cluster binding. Residue H69 participates in (2E)-4-hydroxy-3-methylbut-2-enyl diphosphate binding. Position 69 (H69) interacts with dimethylallyl diphosphate. H69 provides a ligand contact to isopentenyl diphosphate. C130 contacts [4Fe-4S] cluster. H158 contributes to the (2E)-4-hydroxy-3-methylbut-2-enyl diphosphate binding site. H158 lines the dimethylallyl diphosphate pocket. Residue H158 participates in isopentenyl diphosphate binding. Catalysis depends on E160, which acts as the Proton donor. T223 provides a ligand contact to (2E)-4-hydroxy-3-methylbut-2-enyl diphosphate. C261 is a [4Fe-4S] cluster binding site. Residues S290, S291, N292, and S352 each coordinate (2E)-4-hydroxy-3-methylbut-2-enyl diphosphate. Dimethylallyl diphosphate is bound by residues S290, S291, N292, and S352. S290, S291, N292, and S352 together coordinate isopentenyl diphosphate.

It belongs to the IspH family. It depends on [4Fe-4S] cluster as a cofactor.

It catalyses the reaction isopentenyl diphosphate + 2 oxidized [2Fe-2S]-[ferredoxin] + H2O = (2E)-4-hydroxy-3-methylbut-2-enyl diphosphate + 2 reduced [2Fe-2S]-[ferredoxin] + 2 H(+). The enzyme catalyses dimethylallyl diphosphate + 2 oxidized [2Fe-2S]-[ferredoxin] + H2O = (2E)-4-hydroxy-3-methylbut-2-enyl diphosphate + 2 reduced [2Fe-2S]-[ferredoxin] + 2 H(+). Its pathway is isoprenoid biosynthesis; dimethylallyl diphosphate biosynthesis; dimethylallyl diphosphate from (2E)-4-hydroxy-3-methylbutenyl diphosphate: step 1/1. It participates in isoprenoid biosynthesis; isopentenyl diphosphate biosynthesis via DXP pathway; isopentenyl diphosphate from 1-deoxy-D-xylulose 5-phosphate: step 6/6. Catalyzes the conversion of 1-hydroxy-2-methyl-2-(E)-butenyl 4-diphosphate (HMBPP) into a mixture of isopentenyl diphosphate (IPP) and dimethylallyl diphosphate (DMAPP). Acts in the terminal step of the DOXP/MEP pathway for isoprenoid precursor biosynthesis. The polypeptide is 4-hydroxy-3-methylbut-2-enyl diphosphate reductase (Synechocystis sp. (strain ATCC 27184 / PCC 6803 / Kazusa)).